The sequence spans 63 residues: Venom peptide 2b (63 aa).

Residues 1-22 (MRGTSFILFAVVVILGFLHGNA) form the signal peptide. AXPX repeat units follow at residues 22–25 (AEPL), 26–29 (ANPE), 32–35 (ANPD), 38–41 (ANPD), and 44–47 (ANPE). Positions 23-48 (EPLANPEPSANPDPLANPDPLANPEA) are excised as a propeptide. Leu62 is modified (leucine amide).

Belongs to the MCD family. Mastoparan subfamily. As to expression, expressed by the venom gland.

The protein resides in the secreted. It is found in the target cell membrane. Functionally, antimicrobial peptide with strong and moderate activity against the fungi B.cinerea (MIC=5 uM) and C.albicans (MIC=100 uM), the Gram-negative bacterium E.coli (MIC=200 uM) and the Gram-positive bacterium S.aureus (MIC=25 uM). Shows cytolytic activity against insect cell lines. Has potent hemolytic activity against human erythrocytes (EC(50)=64 uM). In vivo, peptide injection in the vicinity of the head and thorax of lepidopteran larvae induces feeding disorder followed by death due to starvation. This Eumenes pomiformis (Potter wasp) protein is Venom peptide 2b.